Here is a 311-residue protein sequence, read N- to C-terminus: tRNA-cytidine(32) 2-sulfurtransferase (311 aa).

Positions 47–52 (SGGKDS) match the PP-loop motif motif. Residues Cys-122, Cys-125, and Cys-213 each coordinate [4Fe-4S] cluster.

This sequence belongs to the TtcA family. Homodimer. Mg(2+) is required as a cofactor. [4Fe-4S] cluster serves as cofactor.

The protein localises to the cytoplasm. The enzyme catalyses cytidine(32) in tRNA + S-sulfanyl-L-cysteinyl-[cysteine desulfurase] + AH2 + ATP = 2-thiocytidine(32) in tRNA + L-cysteinyl-[cysteine desulfurase] + A + AMP + diphosphate + H(+). Its pathway is tRNA modification. Its function is as follows. Catalyzes the ATP-dependent 2-thiolation of cytidine in position 32 of tRNA, to form 2-thiocytidine (s(2)C32). The sulfur atoms are provided by the cysteine/cysteine desulfurase (IscS) system. In Klebsiella pneumoniae subsp. pneumoniae (strain ATCC 700721 / MGH 78578), this protein is tRNA-cytidine(32) 2-sulfurtransferase.